A 498-amino-acid chain; its full sequence is uncharacterized protein (498 aa).

Disordered stretches follow at residues 1 to 48 (MSND…ARPK), 99 to 134 (NDLH…GNSK), and 190 to 209 (NSEN…TSSN). Over residues 35 to 44 (ELSTPKQVNQ) the composition is skewed to polar residues. Residues 99–110 (NDLHPLDNDSTR) are compositionally biased toward basic and acidic residues. Residues 111 to 126 (TSKTLKNSSEVLTASK) show a composition bias toward polar residues.

This is an uncharacterized protein from Schizosaccharomyces pombe (strain 972 / ATCC 24843) (Fission yeast).